The primary structure comprises 465 residues: Sorting nexin-8 (465 aa).

Low complexity predominate over residues 1–19 (MTGRAMDPLPAAAVGAAAE). Residues 1-36 (MTGRAMDPLPAAAVGAAAEAEADEEADPPASDLPTP) are disordered. One can recognise a PX domain in the interval 73–181 (ARDTVQVELI…KLFLSFSGSD (109 aa)). The a 1,2-diacyl-sn-glycero-3-phospho-(1D-myo-inositol-3-phosphate) site is built by Arg-109, Lys-135, and Arg-148. Thr-452 is subject to Phosphothreonine. At Ser-456 the chain carries Phosphoserine.

It belongs to the sorting nexin family.

It is found in the early endosome membrane. Its function is as follows. May be involved in several stages of intracellular trafficking. May play a role in intracellular protein transport from early endosomes to the trans-Golgi network. This chain is Sorting nexin-8 (SNX8), found in Homo sapiens (Human).